The primary structure comprises 568 residues: Urease subunit alpha (568 aa).

Residues 132 to 568 enclose the Urease domain; the sequence is GAIDTHVHYI…LPLAQLYNLF (437 aa). Ni(2+)-binding residues include H137, H139, and K219. K219 bears the N6-carboxylysine mark. H221 provides a ligand contact to substrate. Ni(2+) contacts are provided by H248 and H274. The active-site Proton donor is the H322. D362 contacts Ni(2+).

It belongs to the metallo-dependent hydrolases superfamily. Urease alpha subunit family. Heterotrimer of UreA (gamma), UreB (beta) and UreC (alpha) subunits. Three heterotrimers associate to form the active enzyme. The cofactor is Ni cation. Carboxylation allows a single lysine to coordinate two nickel ions.

Its subcellular location is the cytoplasm. It carries out the reaction urea + 2 H2O + H(+) = hydrogencarbonate + 2 NH4(+). It participates in nitrogen metabolism; urea degradation; CO(2) and NH(3) from urea (urease route): step 1/1. The chain is Urease subunit alpha from Azobacteroides pseudotrichonymphae genomovar. CFP2.